Consider the following 616-residue polypeptide: Homeodomain-interacting protein kinase 4 (616 aa).

One can recognise a Protein kinase domain in the interval 11-347 (YDIIEVLGKG…PSAALRHPFV (337 aa)). Residues 17–25 (LGKGTFGEV) and Lys-40 each bind ATP. Asp-136 acts as the Proton acceptor in catalysis. The segment at 486 to 616 (HKARKPPAGS…SFLQHVTGHH (131 aa)) is disordered. A compositionally biased stretch (polar residues) spans 496–511 (KSDSNFSNLIRLSQVS). Ser-511 carries the phosphoserine modification.

It belongs to the protein kinase superfamily. CMGC Ser/Thr protein kinase family. HIPK subfamily. Post-translationally, autophosphorylated.

It localises to the cytoplasm. The catalysed reaction is L-seryl-[protein] + ATP = O-phospho-L-seryl-[protein] + ADP + H(+). It carries out the reaction L-threonyl-[protein] + ATP = O-phospho-L-threonyl-[protein] + ADP + H(+). Protein kinase that phosphorylates human TP53 at Ser-9, and thus induces TP53 repression of BIRC5 promoter. May act as a corepressor of transcription factors (Potential). This Homo sapiens (Human) protein is Homeodomain-interacting protein kinase 4 (HIPK4).